A 479-amino-acid chain; its full sequence is MAQHAVYFPDAFLTQMREAMPSTLSFDEFISACQRPLRRSIRINTLKISVADFLALIAPYGWSLTPIPWCHEGFWIERDDEEALPLGSTAEHLSGLFYIQEASSMLPVAALFADDNHPQRVMDMAAAPGSKTTQIAARMGNRGAILANEFSASRVKVLHANISRCGIANTALTHFDGRVFGAALPEMFDAILLDAPCSGEGVVRKDPDALKNWSPESNLDIAATQRELLDSAFHALRPGGTLVYSTCTLNRQENEAVCLWLKETYADAVEFLPLGDLFPDADRALTPEGFLHVFPQIYDCEGFFVARLRKMSSLPAMPAPGYKVGAFPFTPLKGREALHVTQAANAVGLLWDENLHLWQREKEVWLFPAEIESLIGKVRFSRLGIKLAESHNKGYRWQHEATIALACPTHAHAFELSVQEAEEWYRGRDIYPQTPPAADDVLVTFQHQPLGLAKRIGSRIKNSYPRELVRDGKLFTGNS.

Residues 125–131, Glu-149, Asp-176, and Asp-194 each bind S-adenosyl-L-methionine; that span reads AAAPGSK. The Nucleophile role is filled by Cys-247.

This sequence belongs to the class I-like SAM-binding methyltransferase superfamily. RsmB/NOP family.

The protein resides in the cytoplasm. It catalyses the reaction cytidine(1407) in 16S rRNA + S-adenosyl-L-methionine = 5-methylcytidine(1407) in 16S rRNA + S-adenosyl-L-homocysteine + H(+). Specifically methylates the cytosine at position 1407 (m5C1407) of 16S rRNA. This Salmonella newport (strain SL254) protein is Ribosomal RNA small subunit methyltransferase F.